Here is a 138-residue protein sequence, read N- to C-terminus: Centromere protein S (138 aa).

At M1 the chain carries N-acetylmethionine. The interval 112 to 138 is disordered; sequence AKKKKKLEDENRNSVESAEAGVEESEN.

It belongs to the TAF9 family. CENP-S/MHF1 subfamily. Heterodimer with CENPX, sometimes called MHF; this interaction stabilizes both partners. MHF heterodimers can assemble to form tetrameric structures. MHF also coassemble with CENPT-CENPW heterodimers at centromeres to form the tetrameric CENP-T-W-S-X complex. Forms a discrete complex with FANCM and CENPX, called FANCM-MHF; this interaction, probably mediated by direct binding between CENPS and FANCM, leads to synergistic activation of double-stranded DNA binding and strongly stimulates FANCM-mediated DNA remodeling. Recruited by FANCM to the Fanconi anemia (FA) core complex, which consists of CENPS, CENPX, FANCA, FANCB, FANCC, FANCE, FANCF, FANCG, FANCL, FANCM, FAAP24 and FAAP100. The FA core complex associates with Bloom syndrome (BLM) complex, which consists of at least BLM, DNA topoisomerase 3-alpha (TOP3A), RMI1/BLAP75, RPA1/RPA70 and RPA2/RPA32. The super complex between FA and BLM is called BRAFT. Component of the CENPA-CAD complex, composed of CENPI, CENPK, CENPL, CENPO, CENPP, CENPQ, CENPR and CENPS. The CENPA-CAD complex is probably recruited on centromeres by the CENPA-NAC complex, at least composed of CENPA, CENPC, CENPH, CENPM, CENPN, CENPT and CENPU.

It is found in the nucleus. The protein resides in the chromosome. Its subcellular location is the centromere. The protein localises to the kinetochore. Functionally, DNA-binding component of the Fanconi anemia (FA) core complex. Required for the normal activation of the FA pathway, leading to monoubiquitination of the FANCI-FANCD2 complex in response to DNA damage, cellular resistance to DNA cross-linking drugs, and prevention of chromosomal breakage. In complex with CENPX (MHF heterodimer), crucial cofactor for FANCM in both binding and ATP-dependent remodeling of DNA. Stabilizes FANCM. In complex with CENPX and FANCM (but not other FANC proteins), rapidly recruited to blocked forks and promotes gene conversion at blocked replication forks. In complex with CENPT, CENPW and CENPX (CENP-T-W-S-X heterotetramer), involved in the formation of a functional kinetochore outer plate, which is essential for kinetochore-microtubule attachment and faithful mitotic progression. As a component of MHF and CENP-T-W-S-X complexes, binds DNA and bends it to form a nucleosome-like structure. DNA-binding function is fulfilled in the presence of CENPX, with the following preference for DNA substates: Holliday junction &gt; double-stranded &gt; splay arm &gt; single-stranded. Does not bind DNA on its own. The polypeptide is Centromere protein S (CENPS) (Bos taurus (Bovine)).